Here is a 480-residue protein sequence, read N- to C-terminus: Ochratoxinase (480 aa).

Residues His111, His113, Lys246, His287, and His307 each contribute to the Zn(2+) site. Lys246 is a catalytic residue. Asp378 is an active-site residue.

It belongs to the metallo-dependent hydrolases superfamily. Ochratoxinase amidase 2 family. As to quaternary structure, homooctamer. It depends on Zn(2+) as a cofactor.

The protein localises to the secreted. The catalysed reaction is ochratoxin A + H2O = ochratoxin alpha + L-phenylalanine. With respect to regulation, the Zn(2+)-specific chelator 1,10-phenanthroline inhibits the enzyme activity. Carboxypeptidase that catalyzes the release of a C-terminal amino acid with specific catalytic activity for aromatic amino acids such as phenylalanine. Is able to degrade ochratoxin A, one of the five major mycotoxins most harmful to humans and animals that is produced by Aspergillus and Penicillium species and occurs in a wide range of agricultural products. The protein is Ochratoxinase of Aspergillus niger (strain ATCC 1015 / CBS 113.46 / FGSC A1144 / LSHB Ac4 / NCTC 3858a / NRRL 328 / USDA 3528.7).